The primary structure comprises 383 residues: Na(+)/H(+) antiporter NhaA (383 aa).

Helical transmembrane passes span 10 to 30, 56 to 76, 91 to 111, 121 to 141, 150 to 170, 174 to 194, 206 to 226, 254 to 274, 289 to 308, 327 to 347, and 355 to 375; these read LIGGLILFSAALLAIVVNNSP, LMHWINDGLMAIYFLYIGLEI, IITPAIAAFAGLAMPSLIYLS, GWAIPSATDIAFTLAILALLG, LLVITIAIFDDIAAIAIIAIF, SLSLLSLSLGTLFILAMIICN, VVLGFFAWFCTIKSGVHATLA, PWIIYFILPVFAFANAGISFS, IIWGLFVGKQLGIFSILAVF, GISLLCGIGFTMSLFIGVLAF, and AIKIGVVVGSVLSGFFGYIVL.

This sequence belongs to the NhaA Na(+)/H(+) (TC 2.A.33) antiporter family.

The protein resides in the cell inner membrane. The enzyme catalyses Na(+)(in) + 2 H(+)(out) = Na(+)(out) + 2 H(+)(in). In terms of biological role, na(+)/H(+) antiporter that extrudes sodium in exchange for external protons. The chain is Na(+)/H(+) antiporter NhaA from Francisella tularensis subsp. tularensis (strain WY96-3418).